Here is a 319-residue protein sequence, read N- to C-terminus: tRNA uridine(34) hydroxylase (319 aa).

A Rhodanese domain is found at 123 to 221 (GDPDVVVIDT…YLETIPPEQS (99 aa)). The Cysteine persulfide intermediate role is filled by C181. Residues 298-319 (ARQQVHIGASPEPKAMPATAGR) form a disordered region.

It belongs to the TrhO family.

It catalyses the reaction uridine(34) in tRNA + AH2 + O2 = 5-hydroxyuridine(34) in tRNA + A + H2O. Catalyzes oxygen-dependent 5-hydroxyuridine (ho5U) modification at position 34 in tRNAs. This is tRNA uridine(34) hydroxylase from Albidiferax ferrireducens (strain ATCC BAA-621 / DSM 15236 / T118) (Rhodoferax ferrireducens).